A 73-amino-acid polypeptide reads, in one-letter code: SIFamide-related peptide (73 aa).

Residues 1-23 (MVSIRLTFALAIVAIIFAFSVDA) form the signal peptide. Position 35 is a phenylalanine amide (Phe35). Positions 39–73 (SNTMTDYEFTSRALSAICEVASETCTAWMSRQESN) are excised as a propeptide.

Expressed in brain, the retrocerebral complex and in ventral, thoracic and abdominal ganglia (at protein level).

Its subcellular location is the secreted. The chain is SIFamide-related peptide from Camponotus floridanus (Florida carpenter ant).